We begin with the raw amino-acid sequence, 125 residues long: Small ribosomal subunit protein uS13 (125 aa).

The tract at residues 90–125 (QRHRKGLPVRGQRTKTNARTRKGPKRTVAGKKKATK) is disordered.

Belongs to the universal ribosomal protein uS13 family. In terms of assembly, part of the 30S ribosomal subunit. Forms a loose heterodimer with protein S19. Forms two bridges to the 50S subunit in the 70S ribosome.

Its function is as follows. Located at the top of the head of the 30S subunit, it contacts several helices of the 16S rRNA. In the 70S ribosome it contacts the 23S rRNA (bridge B1a) and protein L5 of the 50S subunit (bridge B1b), connecting the 2 subunits; these bridges are implicated in subunit movement. Contacts the tRNAs in the A and P-sites. The chain is Small ribosomal subunit protein uS13 from Bifidobacterium adolescentis (strain ATCC 15703 / DSM 20083 / NCTC 11814 / E194a).